The primary structure comprises 197 residues: uncharacterized protein (197 aa).

An N-terminal signal peptide occupies residues 1 to 30 (MSTYIIINIALLIAIVALIFFLSKKTKSEA).

This is an uncharacterized protein from Acanthamoeba polyphaga (Amoeba).